Reading from the N-terminus, the 312-residue chain is Protein-glutamate methylesterase/protein-glutamine glutaminase (312 aa).

A Response regulatory domain is found at 5–122 (RVLSVDDSAL…REGMLAYSEM (118 aa)). Position 56 is a 4-aspartylphosphate (D56). The CheB-type methylesterase domain maps to 152–307 (LLSSEKLIAI…QQMLAKISAG (156 aa)). Catalysis depends on residues S164, H190, and D249.

The protein belongs to the CheB family. In terms of processing, phosphorylated by CheA. Phosphorylation of the N-terminal regulatory domain activates the methylesterase activity.

Its subcellular location is the cytoplasm. It catalyses the reaction [protein]-L-glutamate 5-O-methyl ester + H2O = L-glutamyl-[protein] + methanol + H(+). It carries out the reaction L-glutaminyl-[protein] + H2O = L-glutamyl-[protein] + NH4(+). Its function is as follows. Involved in chemotaxis. Part of a chemotaxis signal transduction system that modulates chemotaxis in response to various stimuli. Catalyzes the demethylation of specific methylglutamate residues introduced into the chemoreceptors (methyl-accepting chemotaxis proteins or MCP) by CheR. Also mediates the irreversible deamidation of specific glutamine residues to glutamic acid. The protein is Protein-glutamate methylesterase/protein-glutamine glutaminase of Shigella boydii serotype 4 (strain Sb227).